The primary structure comprises 199 residues: GTP-binding protein Di-Ras2 (199 aa).

GTP-binding positions include 14-21, 33-39, 61-65, and 121-124; these read GAGGVGKS, RESYIPT, DTTGS, and NKCD. Ser35 is modified (phosphoserine). An Effector region motif is present at residues 36 to 44; that stretch reads YIPTVEDTY. Ser126 is modified (phosphoserine). 152-153 contacts GTP; it reads AK. A Cysteine methyl ester modification is found at Cys196. A lipid anchor (S-geranylgeranyl cysteine) is attached at Cys196. The propeptide at 197-199 is removed in mature form; the sequence is VVM.

The protein belongs to the small GTPase superfamily. Di-Ras family. Post-translationally, ubiquitinated by the ECS(ASB11) complex via 'Lys-11'-linked ubiquitin chains, leading to its degradation by the proteasome.

It localises to the cell membrane. It catalyses the reaction GTP + H2O = GDP + phosphate + H(+). Functionally, displays low GTPase activity and exists predominantly in the GTP-bound form. The protein is GTP-binding protein Di-Ras2 (Diras2) of Mus musculus (Mouse).